The sequence spans 478 residues: Probable cytosolic Fe-S cluster assembly factor AAEL012261 (478 aa).

Residues Cys23, Cys69, Cys72, Cys75, Cys189, Cys245, Cys396, and Cys400 each contribute to the [4Fe-4S] cluster site.

It belongs to the NARF family.

Its function is as follows. Component of the cytosolic iron-sulfur (Fe/S) protein assembly machinery. Required for maturation of extramitochondrial Fe/S proteins. This Aedes aegypti (Yellowfever mosquito) protein is Probable cytosolic Fe-S cluster assembly factor AAEL012261.